The chain runs to 456 residues: Probable galactarate/D-glucarate transporter GudP (456 aa).

10 helical membrane passes run tyrosine 11–isoleucine 31, tyrosine 51–leucine 71, lysine 78–tyrosine 96, isoleucine 102–alanine 119, isoleucine 246–valine 266, glycine 280–isoleucine 300, threonine 317–alanine 337, valine 341–valine 361, phenylalanine 381–glycine 401, and serine 408–isoleucine 428.

Belongs to the major facilitator superfamily. Phthalate permease family.

Its subcellular location is the cell inner membrane. The enzyme catalyses galactarate(in) + H(+)(in) = galactarate(out) + H(+)(out). It catalyses the reaction D-glucarate(in) + H(+)(in) = D-glucarate(out) + H(+)(out). Functionally, probably involved in the uptake of galactarate and/or D-glucarate. This is Probable galactarate/D-glucarate transporter GudP (gudP) from Pseudomonas putida (Arthrobacter siderocapsulatus).